A 256-amino-acid polypeptide reads, in one-letter code: Triosephosphate isomerase (256 aa).

Residue 9–11 (NWK) coordinates substrate. His97 serves as the catalytic Electrophile. The active-site Proton acceptor is Glu169. Substrate-binding positions include Gly175, Ser214, and 235 to 236 (GG).

The protein belongs to the triosephosphate isomerase family. In terms of assembly, homodimer.

It is found in the cytoplasm. The enzyme catalyses D-glyceraldehyde 3-phosphate = dihydroxyacetone phosphate. It functions in the pathway carbohydrate biosynthesis; gluconeogenesis. The protein operates within carbohydrate degradation; glycolysis; D-glyceraldehyde 3-phosphate from glycerone phosphate: step 1/1. Its function is as follows. Involved in the gluconeogenesis. Catalyzes stereospecifically the conversion of dihydroxyacetone phosphate (DHAP) to D-glyceraldehyde-3-phosphate (G3P). In Vibrio vulnificus (strain CMCP6), this protein is Triosephosphate isomerase.